Consider the following 695-residue polypeptide: Follicle-stimulating hormone receptor (695 aa).

The N-terminal stretch at 1-17 (MALLLVALLAFLSLGSG) is a signal peptide. 2 cysteine pairs are disulfide-bonded: Cys-18–Cys-25 and Cys-23–Cys-32. An LRRNT domain is found at 18-46 (CHHRLCHCSNGVFLCQESKVTEIPSDLPR). The Extracellular portion of the chain corresponds to 18-366 (CHHRLCHCSN…EDIMGDDILR (349 aa)). LRR repeat units follow at residues 49–72 (VELR…FGDL), 73–97 (EKIE…LPKL), 98–118 (HEIR…AFQN), 119–143 (LPNL…KIQS), 144–169 (LQKV…MGLS), 170–192 (FESM…AFNG), 193–216 (TQLD…VFQG), 217–240 (ASGP…GLEN), and 241–259 (LKKL…PSLE). N-linked (GlcNAc...) asparagine glycosylation is found at Asn-191 and Asn-199. 4 disulfide bridges follow: Cys-275-Cys-346, Cys-276-Cys-292, Cys-276-Cys-356, and Cys-292-Cys-338. Residue Asn-293 is glycosylated (N-linked (GlcNAc...) asparagine). Sulfotyrosine is present on Tyr-335. A helical transmembrane segment spans residues 367–387 (VLIWFISILAITGNILVLVIL). The Cytoplasmic portion of the chain corresponds to 388–398 (ITSQYKLTVPR). A helical membrane pass occupies residues 399 to 421 (FLMCNLAFADLCIGIYLLLIASV). The Extracellular segment spans residues 422–443 (DVHTKTEYHNYAIDWQTGAGCD). An intrachain disulfide couples Cys-442 to Cys-517. The chain crosses the membrane as a helical span at residues 444-465 (AAGFFTVFASELSVYTLTAITL). The Cytoplasmic segment spans residues 466-485 (ERWHTITHAMQLECKVQLRH). The helical transmembrane segment at 486-508 (AASIMLVGWIFAFAVALFPIFGI) threads the bilayer. Residues 509–528 (SSYMKVSICLPMDIDSPLSQ) lie on the Extracellular side of the membrane. Residues 529–550 (LYVMSLLVLNVLAFVVICGCYT) traverse the membrane as a helical segment. Residues 551 to 573 (HIYLTVRNPNITSSSSDTKIAKR) lie on the Cytoplasmic side of the membrane. The helical transmembrane segment at 574–597 (MAMLIFTDFLCMAPISFFAISASL) threads the bilayer. Residues 598–608 (KVPLITVSKSK) lie on the Extracellular side of the membrane. A helical membrane pass occupies residues 609–630 (ILLVLFYPINSCANPFLYAIFT). The Cytoplasmic portion of the chain corresponds to 631-695 (KNFRRDFFIL…LIPLRHLAKN (65 aa)).

Belongs to the G-protein coupled receptor 1 family. FSH/LSH/TSH subfamily. In terms of assembly, homotrimer. Functions as a homotrimer binding the FSH hormone heterodimer composed of CGA and FSHB. Interacts with ARRB2. Interacts with APPL2; interaction is independent of follicle stimulating hormone stimulation. Post-translationally, N-glycosylated; indirectly required for FSH-binding, possibly via a conformational change that allows high affinity binding of hormone. In terms of processing, sulfated.

The protein resides in the cell membrane. Its function is as follows. G protein-coupled receptor for follitropin, the follicle-stimulating hormone. Through cAMP production activates the downstream PI3K-AKT and ERK1/ERK2 signaling pathways. This chain is Follicle-stimulating hormone receptor (FSHR), found in Bos taurus (Bovine).